Here is a 1828-residue protein sequence, read N- to C-terminus: Dedicator of cytokinesis protein 2 (1828 aa).

One can recognise an SH3 domain in the interval 8–69 (DKERHGVAIY…PTSFIHLKEV (62 aa)). The residue at position 304 (Lys-304) is an N6-acetyllysine. A C2 DOCK-type domain is found at 423–607 (RNDIYITLLQ…DVFSISTLVC (185 aa)). 2 positions are modified to phosphoserine: Ser-588 and Ser-593. Lys-738 bears the N6-acetyllysine mark. A DOCKER domain is found at 1210-1621 (YKDNNREEMY…VEKEYGVREM (412 aa)). The segment at 1652 to 1703 (SDCSTPSKVPAESFDLESAPPKTPKVEEEPISPGSTLPEVKLRRSKKRTKRS) is disordered. A phosphoserine mark is found at Ser-1683, Ser-1704, Ser-1729, and Ser-1782.

The protein belongs to the DOCK family. In terms of assembly, homodimer. Interacts with RAC1 and RAC2. Interacts with CRKL and VAV. Interacts with CD3Z. As to expression, specifically expressed in hematopoietic cells.

The protein localises to the endomembrane system. It localises to the cytoplasm. Its subcellular location is the cytoskeleton. In terms of biological role, involved in cytoskeletal rearrangements required for lymphocyte migration in response of chemokines. Activates RAC1 and RAC2, but not CDC42, by functioning as a guanine nucleotide exchange factor (GEF), which exchanges bound GDP for free GTP. May also participate in IL2 transcriptional activation via the activation of RAC2. This is Dedicator of cytokinesis protein 2 (Dock2) from Mus musculus (Mouse).